A 102-amino-acid chain; its full sequence is MAKGQSLQDPFLNALRRERVPVSIYLVNGIKLQGQIESFDQFVILLKNTVSQMVYKHAISTVVPSRPVSHHSNNAGGSTSSNYHHGSSAQNTSAQQDSEENE.

The Sm domain maps to 9–68 (DPFLNALRRERVPVSIYLVNGIKLQGQIESFDQFVILLKNTVSQMVYKHAISTVVPSRPV). The interval 63 to 102 (VPSRPVSHHSNNAGGSTSSNYHHGSSAQNTSAQQDSEENE) is disordered. Residues 70-96 (HHSNNAGGSTSSNYHHGSSAQNTSAQQ) show a composition bias toward polar residues.

The protein belongs to the Hfq family. As to quaternary structure, homohexamer.

Functionally, RNA chaperone that binds small regulatory RNA (sRNAs) and mRNAs to facilitate mRNA translational regulation in response to envelope stress, environmental stress and changes in metabolite concentrations. Also binds with high specificity to tRNAs. This Escherichia coli O17:K52:H18 (strain UMN026 / ExPEC) protein is RNA-binding protein Hfq.